The sequence spans 295 residues: Ankyrin repeat and SOCS box protein 17 (295 aa).

The stretch at 146–176 (SGITPLLYVAQTRQSNILKILLQYGILEREK) is one ANK repeat. One can recognise an SOCS box domain in the interval 243-295 (DYIPPTRYKDPCELVHLCRITIRTQLLANNMLPNGIFSLLIPTRLQNFLNLES).

This sequence belongs to the ankyrin SOCS box (ASB) family. In terms of tissue distribution, specifically expressed in testis. Localizes to spermatogenic cells in testis, with highest expression in round spermatids and condensing spermatids and lower expression in pachytene spermatocytes.

Its pathway is protein modification; protein ubiquitination. Its function is as follows. May be a substrate-recognition component of a SCF-like ECS (Elongin-Cullin-SOCS-box protein) E3 ubiquitin-protein ligase complex which mediates the ubiquitination and subsequent proteasomal degradation of target proteins. The sequence is that of Ankyrin repeat and SOCS box protein 17 (Asb17) from Mus musculus (Mouse).